Here is a 68-residue protein sequence, read N- to C-terminus: Small integral membrane protein 10-like protein 3 (68 aa).

In Homo sapiens (Human), this protein is Small integral membrane protein 10-like protein 3.